The sequence spans 311 residues: tRNA dimethylallyltransferase (311 aa).

Residue 11 to 18 coordinates ATP; it reads GPTAVGKT. 13-18 contacts substrate; sequence TAVGKT. Residues 36–39 form an interaction with substrate tRNA region; sequence DSMQ.

Belongs to the IPP transferase family. Monomer. Mg(2+) is required as a cofactor.

It carries out the reaction adenosine(37) in tRNA + dimethylallyl diphosphate = N(6)-dimethylallyladenosine(37) in tRNA + diphosphate. Its function is as follows. Catalyzes the transfer of a dimethylallyl group onto the adenine at position 37 in tRNAs that read codons beginning with uridine, leading to the formation of N6-(dimethylallyl)adenosine (i(6)A). In Clostridioides difficile (strain 630) (Peptoclostridium difficile), this protein is tRNA dimethylallyltransferase.